A 372-amino-acid polypeptide reads, in one-letter code: PqqA peptide cyclase (372 aa).

The 216-residue stretch at 4-219 folds into the Radical SAM core domain; the sequence is APPPLSVLLE…VDTARRELGD (216 aa). Residues Cys18, Cys22, and Cys25 each coordinate [4Fe-4S] cluster. Residues 342–372 are disordered; it reads ATAEREAAAPAPEFIYRRPERPAPATADTLE.

This sequence belongs to the radical SAM superfamily. PqqE family. As to quaternary structure, interacts with PqqD. The interaction is necessary for activity of PqqE. The cofactor is [4Fe-4S] cluster.

It catalyses the reaction [PQQ precursor protein] + S-adenosyl-L-methionine = E-Y cross-linked-[PQQ precursor protein] + 5'-deoxyadenosine + L-methionine + H(+). The protein operates within cofactor biosynthesis; pyrroloquinoline quinone biosynthesis. In terms of biological role, catalyzes the cross-linking of a glutamate residue and a tyrosine residue in the PqqA protein as part of the biosynthesis of pyrroloquinoline quinone (PQQ). In Xanthomonas oryzae pv. oryzae (strain MAFF 311018), this protein is PqqA peptide cyclase.